Consider the following 439-residue polypeptide: Ribosomal protein uS12 methylthiotransferase RimO (439 aa).

An MTTase N-terminal domain is found at 3–118 (KKFYITTLGC…AGKILREKFP (116 aa)). Residues cysteine 12, cysteine 48, cysteine 81, cysteine 157, cysteine 161, and cysteine 164 each coordinate [4Fe-4S] cluster. Residues 143–370 (NYSKPYAYVK…RDVHLAILEE (228 aa)) enclose the Radical SAM core domain. The TRAM domain maps to 373 to 438 (ESRIGQTYDA…EYDMNGTWIS (66 aa)).

The protein belongs to the methylthiotransferase family. RimO subfamily. It depends on [4Fe-4S] cluster as a cofactor.

The protein localises to the cytoplasm. The catalysed reaction is L-aspartate(89)-[ribosomal protein uS12]-hydrogen + (sulfur carrier)-SH + AH2 + 2 S-adenosyl-L-methionine = 3-methylsulfanyl-L-aspartate(89)-[ribosomal protein uS12]-hydrogen + (sulfur carrier)-H + 5'-deoxyadenosine + L-methionine + A + S-adenosyl-L-homocysteine + 2 H(+). In terms of biological role, catalyzes the methylthiolation of an aspartic acid residue of ribosomal protein uS12. This Leptospira borgpetersenii serovar Hardjo-bovis (strain JB197) protein is Ribosomal protein uS12 methylthiotransferase RimO.